The sequence spans 82 residues: Small ribosomal subunit protein bS16 (82 aa).

This sequence belongs to the bacterial ribosomal protein bS16 family.

The protein is Small ribosomal subunit protein bS16 of Pectobacterium atrosepticum (strain SCRI 1043 / ATCC BAA-672) (Erwinia carotovora subsp. atroseptica).